A 289-amino-acid polypeptide reads, in one-letter code: MAGAKEIRTKISSVQSTQKITKAMEMVAASKMRKTQDRMSSSRPYSKAIQGVISHISKANIDYQHPFLIEREVKNVGILIISTDRGLCGGLNVNLFKTALSEIKNWKEQNVEVSLGLIGAKGIGFFQSLGLNIKAQHSGMGDTPVAEELIGIANRMFEAYKEGKIDAIYVTYNKFINTMSQKPIMEKLVPLPELDNDSLGKNSDNWEYIYEPNPQTLLDSLLVRYLESQVYQAVVENLASEQAARMVAMKAATDNAGNLINDLQLVYNKARQASITNELNEIVAGAAAI.

This sequence belongs to the ATPase gamma chain family. As to quaternary structure, F-type ATPases have 2 components, CF(1) - the catalytic core - and CF(0) - the membrane proton channel. CF(1) has five subunits: alpha(3), beta(3), gamma(1), delta(1), epsilon(1). CF(0) has three main subunits: a, b and c.

Its subcellular location is the cell inner membrane. In terms of biological role, produces ATP from ADP in the presence of a proton gradient across the membrane. The gamma chain is believed to be important in regulating ATPase activity and the flow of protons through the CF(0) complex. In Histophilus somni (strain 129Pt) (Haemophilus somnus), this protein is ATP synthase gamma chain.